A 134-amino-acid chain; its full sequence is ATP synthase epsilon chain (134 aa).

Belongs to the ATPase epsilon chain family. In terms of assembly, F-type ATPases have 2 components, CF(1) - the catalytic core - and CF(0) - the membrane proton channel. CF(1) has five subunits: alpha(3), beta(3), gamma(1), delta(1), epsilon(1). CF(0) has three main subunits: a, b and c.

The protein resides in the cell membrane. In terms of biological role, produces ATP from ADP in the presence of a proton gradient across the membrane. This chain is ATP synthase epsilon chain (atpC), found in Priestia megaterium (strain ATCC 12872 / QMB1551) (Bacillus megaterium).